A 274-amino-acid polypeptide reads, in one-letter code: MTEFTTLLQQGNAWFFIPSVILLGALHGLEPGHSKTMMAAFIIAIKGTIKQAVMLGLAATISHTAVVWLIAFGGMVISKRFTAQSAEPWLQLISAVIIISTAFWMFWRTWRGERNWLENMHGHDYEHHHHDHEHHHDHGHHHHHEHGEYQDAHARAHANDIKRRFDGREVTNWQILLFGLTGGLIPCPAAITVLLICIQLKALTLGATLVVSFSIGLALTLVTVGVGAAISVQQVAKRWSGFNTLAKRAPYFSSLLIGLVGVYMGVHGFMGIMR.

Over 1 to 12 the chain is Periplasmic; the sequence is MTEFTTLLQQGN. A helical membrane pass occupies residues 13–33; that stretch reads AWFFIPSVILLGALHGLEPGH. Topologically, residues 34–56 are cytoplasmic; the sequence is SKTMMAAFIIAIKGTIKQAVMLG. Residues 57 to 77 traverse the membrane as a helical segment; sequence LAATISHTAVVWLIAFGGMVI. Topologically, residues 78-86 are periplasmic; sequence SKRFTAQSA. The helical transmembrane segment at 87–107 threads the bilayer; the sequence is EPWLQLISAVIIISTAFWMFW. At 108 to 174 the chain is on the cytoplasmic side; it reads RTWRGERNWL…FDGREVTNWQ (67 aa). The interval 127–153 is disordered; the sequence is HHHHDHEHHHDHGHHHHHEHGEYQDAH. Positions 129–144 are enriched in basic residues; that stretch reads HHDHEHHHDHGHHHHH. A helical transmembrane segment spans residues 175 to 195; the sequence is ILLFGLTGGLIPCPAAITVLL. The Periplasmic portion of the chain corresponds to 196–209; the sequence is ICIQLKALTLGATL. Residues 210-230 traverse the membrane as a helical segment; sequence VVSFSIGLALTLVTVGVGAAI. Residues 231 to 251 lie on the Cytoplasmic side of the membrane; it reads SVQQVAKRWSGFNTLAKRAPY. The helical transmembrane segment at 252–272 threads the bilayer; sequence FSSLLIGLVGVYMGVHGFMGI. Topologically, residues 273-274 are periplasmic; the sequence is MR.

The protein belongs to the NiCoT transporter (TC 2.A.52) family. RcnA subfamily.

It is found in the cell inner membrane. Efflux system for nickel and cobalt. The polypeptide is Nickel/cobalt efflux system RcnA (rcnA) (Escherichia coli O9:H4 (strain HS)).